The sequence spans 64 residues: Small ribosomal subunit protein eS17 (64 aa).

This sequence belongs to the eukaryotic ribosomal protein eS17 family.

This Methanocorpusculum labreanum (strain ATCC 43576 / DSM 4855 / Z) protein is Small ribosomal subunit protein eS17.